Here is a 134-residue protein sequence, read N- to C-terminus: Small ribosomal subunit protein uS8c (134 aa).

The protein belongs to the universal ribosomal protein uS8 family. As to quaternary structure, part of the 30S ribosomal subunit.

It is found in the plastid. The protein localises to the chloroplast. Functionally, one of the primary rRNA binding proteins, it binds directly to 16S rRNA central domain where it helps coordinate assembly of the platform of the 30S subunit. The sequence is that of Small ribosomal subunit protein uS8c (rps8) from Draba nemorosa (Woodland whitlowgrass).